The chain runs to 321 residues: Nodulation protein D 1 (321 aa).

Residues 6 to 63 (LDLNLLVALDALMTERKLTAAARSINLSQPAMSAAITRLRTYFRDELFTMNGRELVPT) enclose the HTH lysR-type domain. Residues 23 to 42 (LTAAARSINLSQPAMSAAIT) constitute a DNA-binding region (H-T-H motif).

It belongs to the LysR transcriptional regulatory family.

Functionally, nodD regulates the expression of the nodABCFE genes which encode other nodulation proteins. NodD is also a negative regulator of its own expression. Binds flavonoids as inducers. This is Nodulation protein D 1 (nodD1) from Bradyrhizobium japonicum.